A 309-amino-acid polypeptide reads, in one-letter code: Malate dehydrogenase (309 aa).

NAD(+)-binding positions include 10–15 and aspartate 34; that span reads GAGNVG. Arginine 83 and arginine 89 together coordinate substrate. NAD(+)-binding positions include asparagine 96 and 119–121; that span reads VTN. Asparagine 121 and arginine 152 together coordinate substrate. Histidine 176 serves as the catalytic Proton acceptor.

It belongs to the LDH/MDH superfamily. MDH type 3 family.

The catalysed reaction is (S)-malate + NAD(+) = oxaloacetate + NADH + H(+). Its function is as follows. Catalyzes the reversible oxidation of malate to oxaloacetate. The chain is Malate dehydrogenase from Desulforudis audaxviator (strain MP104C).